The following is a 200-amino-acid chain: Adenylate kinase (200 aa).

10 to 15 (GAGKGT) contributes to the ATP binding site. The interval 30 to 59 (STGDMLRAAVAAGTPVGLEAKSIMESGGLV) is NMP. AMP is bound by residues threonine 31, arginine 36, 57–59 (GLV), 85–88 (GFPR), and glutamine 92. The tract at residues 126–142 (KRAEETAARGQPVRKDD) is LID. Residue arginine 127 coordinates ATP. AMP-binding residues include arginine 139 and arginine 150. Residue lysine 178 participates in ATP binding.

It belongs to the adenylate kinase family. As to quaternary structure, monomer.

The protein localises to the cytoplasm. It catalyses the reaction AMP + ATP = 2 ADP. It functions in the pathway purine metabolism; AMP biosynthesis via salvage pathway; AMP from ADP: step 1/1. Its function is as follows. Catalyzes the reversible transfer of the terminal phosphate group between ATP and AMP. Plays an important role in cellular energy homeostasis and in adenine nucleotide metabolism. The protein is Adenylate kinase of Methylorubrum populi (strain ATCC BAA-705 / NCIMB 13946 / BJ001) (Methylobacterium populi).